The following is a 732-amino-acid chain: MIGRKEKERERPYYRDPDDPEYIKDLQRPAVIKEDLSEMERRKRVQQILESKSFCHELEEVIRQECDTARTDPDHLQVLQKLSDLTVPQGNMSFGNLHTYGGNTIAIADLRGNEKYSKAERIQRNKLACLFRLADLFQWSQGIHNEISYRTNDEDNTFLMNPFGLLYHEITAATIVKIDENGKILDCGTLKAGVNQPAFLLHSAIYKAHPMVRCILHMHTAIVAAVASMKCGLLPLCKEAMVLGPVGYHDYQDIGDDDIQFDEIIANLGDKNVLFLRNQGFLVVGDTIEHATFLANNTVIACETQVRAARAGLDNLIIPEEKAIQRAFRNSRNTNSLKRNGTVDWRVGELEWESWMRVLDHANFQTGHVYRQPQLRPKSAMSTSMVNNNDVAVPPTTSAYGQIDETNLESVSAHRLALLRKEQERVRWMNSPNAYQKVEFLEYGADNPKKITKWVHDVNVPSASGTPVKISSVHQFSPASSNPKEFKEKQKAIKENNRLGTLSAGPQSQILDSVTYEDIALLIKPDNDGTVGQSSTADRAILIGTASKGIIDRQFQHHAQVYHQIYAPNPFSVETDADIKKYVDMVKAKNSQSAPVSARSGYSQYDEVEADTVSLMQGVREHKLSQAALSASDDGLNAGISPNNVRTSEESVNTSYMSQSVVFDCDHPSPMSISTEYPEKVKMTRFSSTQGTSEGNTTSRSCTTASEEEKPTKDEKKKKKKGFLSFMRKKDK.

Disordered regions lie at residues 1 to 22 and 684 to 732; these read MIGR…DPEY and TRFS…KKDK. Positions 685–705 are enriched in polar residues; it reads RFSSTQGTSEGNTTSRSCTTA. Residues 716-732 show a composition bias toward basic residues; it reads KKKKKKGFLSFMRKKDK.

It belongs to the aldolase class II family. Adducin subfamily.

It is found in the cytoplasm. The protein localises to the cytoskeleton. It localises to the cell membrane. In terms of biological role, membrane-cytoskeleton-associated protein that promotes the assembly of the spectrin-actin network. Plays a role in time-dependent memmory loss and the retention of conditioned behavior over time. This is Adducin-related protein 1 from Caenorhabditis elegans.